Reading from the N-terminus, the 128-residue chain is Putative esterase aq_1494 (128 aa).

Residue Asp-15 is part of the active site.

It belongs to the 4-hydroxybenzoyl-CoA thioesterase family.

The protein is Putative esterase aq_1494 of Aquifex aeolicus (strain VF5).